Consider the following 70-residue polypeptide: Putative microRNA 17 host gene protein (70 aa).

Topologically, residues 1–20 (MFCHVDVKISSKRYTWTKLP) are cytoplasmic. The helical transmembrane segment at 21–43 (LNVPKLVLIYLQSHFVLFFFSMC) threads the bilayer. Over 44-70 (QSIWERPAIGRATTSSASWMVGYDCLL) the chain is Extracellular.

Highly expressed in B-cell lymphoma and lung cancer.

The protein resides in the membrane. The chain is Putative microRNA 17 host gene protein (MIR17HG) from Homo sapiens (Human).